We begin with the raw amino-acid sequence, 630 residues long: Golgi apyrase (630 aa).

The Lumenal segment spans residues 1 to 500; that stretch reads MLIENTNDRF…RKQSSSLSNK (500 aa). E152 (proton acceptor) is an active-site residue. The helical transmembrane segment at 501–517 threads the bilayer; the sequence is GFLMWFAIICCIFYLIF. Topologically, residues 518–630 are cytoplasmic; it reads HRSHIIRRRF…SKFKDSRLYD (113 aa). Positions 586-606 are disordered; it reads SSATMQREHEPQRTASQSANL.

Belongs to the GDA1/CD39 NTPase family. As to quaternary structure, interacts with activator subunit VMA13 of vacuolar H(+)-ATPase. Interacts with CDC55; this interaction is disrupted by adenovirus E4orf4, which remains associated with both YND1 and CDC55. Ca(2+) is required as a cofactor. It depends on Mg(2+) as a cofactor. The cofactor is Mn(2+).

The protein resides in the golgi apparatus. It is found in the membrane. It catalyses the reaction a ribonucleoside 5'-triphosphate + 2 H2O = a ribonucleoside 5'-phosphate + 2 phosphate + 2 H(+). The protein operates within protein modification; protein glycosylation. Activity is inhibited both by interaction with VMA13 and by V-ATPase acidification of the lumen. The activity of VMA13 is not required for YND1 inhibition. Its function is as follows. Catalyzes the hydrolysis of phosphoanhydride bonds of nucleoside tri- and di-phosphates. Has equal high activity toward ADP/ATP, GDP/GTP, and UDP/UTP and approximately 50% less toward CDP/CTP and thiamine pyrophosphate. Has no activity toward GMP. Required for Golgi glycosylation and cell wall integrity. Together with CDC55, required for adenovirus E4orf4 (early region 4 open reading frame 4) induced toxicity, the apyrase activity is not required for this function. Plays a role in sphingolipid synthesis. This chain is Golgi apyrase (YND1), found in Saccharomyces cerevisiae (strain ATCC 204508 / S288c) (Baker's yeast).